A 264-amino-acid chain; its full sequence is Hydroxyethylthiazole kinase (264 aa).

Met52 serves as a coordination point for substrate. ATP is bound by residues Arg127 and Thr173. Gly200 provides a ligand contact to substrate.

This sequence belongs to the Thz kinase family. Requires Mg(2+) as cofactor.

The catalysed reaction is 5-(2-hydroxyethyl)-4-methylthiazole + ATP = 4-methyl-5-(2-phosphooxyethyl)-thiazole + ADP + H(+). It participates in cofactor biosynthesis; thiamine diphosphate biosynthesis; 4-methyl-5-(2-phosphoethyl)-thiazole from 5-(2-hydroxyethyl)-4-methylthiazole: step 1/1. Functionally, catalyzes the phosphorylation of the hydroxyl group of 4-methyl-5-beta-hydroxyethylthiazole (THZ). The protein is Hydroxyethylthiazole kinase of Pectobacterium carotovorum subsp. carotovorum (strain PC1).